We begin with the raw amino-acid sequence, 209 residues long: Uracil phosphoribosyltransferase (209 aa).

5-phospho-alpha-D-ribose 1-diphosphate contacts are provided by residues Arg79, Arg104, and 131–139 (DPMLATGGS). Uracil is bound by residues Ile194 and 199–201 (GDA). 5-phospho-alpha-D-ribose 1-diphosphate is bound at residue Asp200.

Belongs to the UPRTase family. Mg(2+) is required as a cofactor.

The catalysed reaction is UMP + diphosphate = 5-phospho-alpha-D-ribose 1-diphosphate + uracil. It participates in pyrimidine metabolism; UMP biosynthesis via salvage pathway; UMP from uracil: step 1/1. Allosterically activated by GTP. Catalyzes the conversion of uracil and 5-phospho-alpha-D-ribose 1-diphosphate (PRPP) to UMP and diphosphate. The chain is Uracil phosphoribosyltransferase from Macrococcus caseolyticus (strain JCSC5402) (Macrococcoides caseolyticum).